The primary structure comprises 446 residues: Aspartokinase (446 aa).

In terms of domain architecture, RPE1 insert spans isoleucine 250 to tyrosine 294.

The protein belongs to the aspartokinase family.

The enzyme catalyses L-aspartate + ATP = 4-phospho-L-aspartate + ADP. It functions in the pathway amino-acid biosynthesis; L-lysine biosynthesis via DAP pathway; (S)-tetrahydrodipicolinate from L-aspartate: step 1/4. The protein operates within amino-acid biosynthesis; L-methionine biosynthesis via de novo pathway; L-homoserine from L-aspartate: step 1/3. Its pathway is amino-acid biosynthesis; L-threonine biosynthesis; L-threonine from L-aspartate: step 1/5. This Rickettsia prowazekii (strain Madrid E) protein is Aspartokinase (lysC).